Consider the following 126-residue polypeptide: MIPGEIITLPEDQEIILNAGRPTLDIMVSNKGDRPIQVGSHYHFLEVNEDLEFYEIDSESKNFIFIDRSNLHNKTRGMRLNIPAGTAVRFEPGDIKKVQLVPLAGTREIYGFNGKINGQLDSSVEQ.

The protein belongs to the urease beta subunit family. In terms of assembly, heterotrimer of UreA (gamma), UreB (beta) and UreC (alpha) subunits. Three heterotrimers associate to form the active enzyme.

It is found in the cytoplasm. It catalyses the reaction urea + 2 H2O + H(+) = hydrogencarbonate + 2 NH4(+). Its pathway is nitrogen metabolism; urea degradation; CO(2) and NH(3) from urea (urease route): step 1/1. This is Urease subunit beta from Gloeothece citriformis (strain PCC 7424) (Cyanothece sp. (strain PCC 7424)).